A 160-amino-acid polypeptide reads, in one-letter code: Transcription elongation factor GreA (160 aa).

Positions 10 to 37 form a coiled coil; sequence TLEGKAKLENELQELKTVKRKEVVERIK.

It belongs to the GreA/GreB family.

In terms of biological role, necessary for efficient RNA polymerase transcription elongation past template-encoded arresting sites. The arresting sites in DNA have the property of trapping a certain fraction of elongating RNA polymerases that pass through, resulting in locked ternary complexes. Cleavage of the nascent transcript by cleavage factors such as GreA or GreB allows the resumption of elongation from the new 3'terminus. GreA releases sequences of 2 to 3 nucleotides. The polypeptide is Transcription elongation factor GreA (Listeria welshimeri serovar 6b (strain ATCC 35897 / DSM 20650 / CCUG 15529 / CIP 8149 / NCTC 11857 / SLCC 5334 / V8)).